Reading from the N-terminus, the 151-residue chain is SsrA-binding protein (151 aa).

This sequence belongs to the SmpB family.

It is found in the cytoplasm. Its function is as follows. Required for rescue of stalled ribosomes mediated by trans-translation. Binds to transfer-messenger RNA (tmRNA), required for stable association of tmRNA with ribosomes. tmRNA and SmpB together mimic tRNA shape, replacing the anticodon stem-loop with SmpB. tmRNA is encoded by the ssrA gene; the 2 termini fold to resemble tRNA(Ala) and it encodes a 'tag peptide', a short internal open reading frame. During trans-translation Ala-aminoacylated tmRNA acts like a tRNA, entering the A-site of stalled ribosomes, displacing the stalled mRNA. The ribosome then switches to translate the ORF on the tmRNA; the nascent peptide is terminated with the 'tag peptide' encoded by the tmRNA and targeted for degradation. The ribosome is freed to recommence translation, which seems to be the essential function of trans-translation. In Geotalea uraniireducens (strain Rf4) (Geobacter uraniireducens), this protein is SsrA-binding protein.